The following is a 434-amino-acid chain: MSKITKIIAREIIDSRGNPTVESEVHLEGGFVGLASSPSGASTGSLEALELRDENKDRFMGKGVEKAVSLINEKISIALKNKNARNQSDIDHIMIDLDGTINKSKLGANAILSVSLAVAKAAAASKRMPLYAHIAEINETPGVFSMPLPMINIINGGKHANNNIDIQEFMIQPISAKTVKESIRIGCEIFHALGELLKEKGMSTTVGDEGGYAPNLKSNEEALNIIQDAIQKTKYKLGQDIRLAIDCAASELYNKNEKKYNLKGENISFSSKEFTHYLEKLSQKYPIVSIEDGQDESDWEGFLYQTHVLGHKIQLVGDDLFVTNKNILKKGIKKGIANSILIKLNQIGTLTETLEAIKTAKQANYGVIISHRSGETEDASIADLSVGTSSGQIKTGSMSRSDRTSKYNQLIRIEENLGTKYAPFHGLREIKSAF.

Glutamine 167 contributes to the (2R)-2-phosphoglycerate binding site. Glutamate 209 (proton donor) is an active-site residue. Aspartate 246, glutamate 291, and aspartate 318 together coordinate Mg(2+). Residues lysine 343, arginine 372, serine 373, and lysine 394 each contribute to the (2R)-2-phosphoglycerate site. Catalysis depends on lysine 343, which acts as the Proton acceptor.

This sequence belongs to the enolase family. As to quaternary structure, component of the RNA degradosome, a multiprotein complex involved in RNA processing and mRNA degradation. Mg(2+) is required as a cofactor.

The protein localises to the cytoplasm. It is found in the secreted. The protein resides in the cell surface. The enzyme catalyses (2R)-2-phosphoglycerate = phosphoenolpyruvate + H2O. The protein operates within carbohydrate degradation; glycolysis; pyruvate from D-glyceraldehyde 3-phosphate: step 4/5. Functionally, catalyzes the reversible conversion of 2-phosphoglycerate (2-PG) into phosphoenolpyruvate (PEP). It is essential for the degradation of carbohydrates via glycolysis. The chain is Enolase from Buchnera aphidicola subsp. Acyrthosiphon pisum (strain 5A).